A 440-amino-acid chain; its full sequence is Glutamyl-tRNA reductase (440 aa).

Substrate is bound by residues 40 to 43, serine 100, 105 to 107, and glutamine 111; these read TCNR and ERE. Cysteine 41 (nucleophile) is an active-site residue. 181-186 is an NADP(+) binding site; sequence GTGAYA.

The protein belongs to the glutamyl-tRNA reductase family. In terms of assembly, homodimer.

It carries out the reaction (S)-4-amino-5-oxopentanoate + tRNA(Glu) + NADP(+) = L-glutamyl-tRNA(Glu) + NADPH + H(+). It participates in porphyrin-containing compound metabolism; protoporphyrin-IX biosynthesis; 5-aminolevulinate from L-glutamyl-tRNA(Glu): step 1/2. In terms of biological role, catalyzes the NADPH-dependent reduction of glutamyl-tRNA(Glu) to glutamate 1-semialdehyde (GSA). The polypeptide is Glutamyl-tRNA reductase (Renibacterium salmoninarum (strain ATCC 33209 / DSM 20767 / JCM 11484 / NBRC 15589 / NCIMB 2235)).